We begin with the raw amino-acid sequence, 164 residues long: MSITFGELVGNFILVTGSVIVLLLLIKKFAWGAIESILQTRSQQISRDIDQAEQSRLSAQQLETKSQANLDASRSQASKIISDAKEIGQLQGDKLVAEATDEAKRLKEKALTDIEQSKSDAISAVKTEMSDLTVLLAEKIMGANLDKTAQSQLIDSYLDDLGEA.

The chain crosses the membrane as a helical span at residues 6–26 (GELVGNFILVTGSVIVLLLLI).

It belongs to the ATPase B chain family. In terms of assembly, F-type ATPases have 2 components, F(1) - the catalytic core - and F(0) - the membrane proton channel. F(1) has five subunits: alpha(3), beta(3), gamma(1), delta(1), epsilon(1). F(0) has three main subunits: a(1), b(2) and c(10-14). The alpha and beta chains form an alternating ring which encloses part of the gamma chain. F(1) is attached to F(0) by a central stalk formed by the gamma and epsilon chains, while a peripheral stalk is formed by the delta and b chains.

The protein resides in the cell membrane. Functionally, f(1)F(0) ATP synthase produces ATP from ADP in the presence of a proton or sodium gradient. F-type ATPases consist of two structural domains, F(1) containing the extramembraneous catalytic core and F(0) containing the membrane proton channel, linked together by a central stalk and a peripheral stalk. During catalysis, ATP synthesis in the catalytic domain of F(1) is coupled via a rotary mechanism of the central stalk subunits to proton translocation. Its function is as follows. Component of the F(0) channel, it forms part of the peripheral stalk, linking F(1) to F(0). The protein is ATP synthase subunit b of Streptococcus pyogenes serotype M6 (strain ATCC BAA-946 / MGAS10394).